The primary structure comprises 160 residues: Glucagon-1 (160 aa).

The signal sequence occupies residues 1–22 (MSDPGFLAAPVLLLLLVSLASA). 3 propeptides span residues 23-40 (SLEQAASRDDDSAERPLS), 74-79 (GGSELQ), and 116-127 (DGGDHLAENSED). Positions 112 to 132 (KSRRDGGDHLAENSEDKRHAE) are disordered.

This sequence belongs to the glucagon family.

The protein localises to the secreted. In terms of biological role, promotes hydrolysis of glycogen and lipids, and raises the blood sugar level. This is Glucagon-1 (gcg1) from Petromyzon marinus (Sea lamprey).